The primary structure comprises 477 residues: Aspartyl/glutamyl-tRNA(Asn/Gln) amidotransferase subunit B (477 aa).

The protein belongs to the GatB/GatE family. GatB subfamily. Heterotrimer of A, B and C subunits.

The enzyme catalyses L-glutamyl-tRNA(Gln) + L-glutamine + ATP + H2O = L-glutaminyl-tRNA(Gln) + L-glutamate + ADP + phosphate + H(+). It carries out the reaction L-aspartyl-tRNA(Asn) + L-glutamine + ATP + H2O = L-asparaginyl-tRNA(Asn) + L-glutamate + ADP + phosphate + 2 H(+). Allows the formation of correctly charged Asn-tRNA(Asn) or Gln-tRNA(Gln) through the transamidation of misacylated Asp-tRNA(Asn) or Glu-tRNA(Gln) in organisms which lack either or both of asparaginyl-tRNA or glutaminyl-tRNA synthetases. The reaction takes place in the presence of glutamine and ATP through an activated phospho-Asp-tRNA(Asn) or phospho-Glu-tRNA(Gln). This Legionella pneumophila subsp. pneumophila (strain Philadelphia 1 / ATCC 33152 / DSM 7513) protein is Aspartyl/glutamyl-tRNA(Asn/Gln) amidotransferase subunit B.